The chain runs to 135 residues: Putative large ribosomal subunit protein eL32' (135 aa).

This sequence belongs to the eukaryotic ribosomal protein eL32 family.

The polypeptide is Putative large ribosomal subunit protein eL32' (Rpl32-ps) (Mus musculus (Mouse)).